The primary structure comprises 416 residues: Serine hydroxymethyltransferase (416 aa).

(6S)-5,6,7,8-tetrahydrofolate-binding positions include Leu-118 and 122 to 124; that span reads GHL. Lys-226 carries the post-translational modification N6-(pyridoxal phosphate)lysine. Glu-242 contacts (6S)-5,6,7,8-tetrahydrofolate.

This sequence belongs to the SHMT family. As to quaternary structure, homodimer. Pyridoxal 5'-phosphate serves as cofactor.

It is found in the cytoplasm. The catalysed reaction is (6R)-5,10-methylene-5,6,7,8-tetrahydrofolate + glycine + H2O = (6S)-5,6,7,8-tetrahydrofolate + L-serine. The protein operates within one-carbon metabolism; tetrahydrofolate interconversion. Its pathway is amino-acid biosynthesis; glycine biosynthesis; glycine from L-serine: step 1/1. Functionally, catalyzes the reversible interconversion of serine and glycine with tetrahydrofolate (THF) serving as the one-carbon carrier. This reaction serves as the major source of one-carbon groups required for the biosynthesis of purines, thymidylate, methionine, and other important biomolecules. Also exhibits THF-independent aldolase activity toward beta-hydroxyamino acids, producing glycine and aldehydes, via a retro-aldol mechanism. The protein is Serine hydroxymethyltransferase of Helicobacter pylori (strain HPAG1).